The chain runs to 206 residues: FMN-dependent NADH:quinone oxidoreductase 2 (206 aa).

Ser-10 contacts FMN.

The protein belongs to the azoreductase type 1 family. As to quaternary structure, homodimer. Requires FMN as cofactor.

The enzyme catalyses 2 a quinone + NADH + H(+) = 2 a 1,4-benzosemiquinone + NAD(+). It catalyses the reaction N,N-dimethyl-1,4-phenylenediamine + anthranilate + 2 NAD(+) = 2-(4-dimethylaminophenyl)diazenylbenzoate + 2 NADH + 2 H(+). Its function is as follows. Quinone reductase that provides resistance to thiol-specific stress caused by electrophilic quinones. Functionally, also exhibits azoreductase activity. Catalyzes the reductive cleavage of the azo bond in aromatic azo compounds to the corresponding amines. The protein is FMN-dependent NADH:quinone oxidoreductase 2 of Rhizobium etli (strain ATCC 51251 / DSM 11541 / JCM 21823 / NBRC 15573 / CFN 42).